A 2073-amino-acid chain; its full sequence is Dedicator of cytokinesis protein 11 (2073 aa).

At S12 the chain carries Phosphoserine. T16 carries the phosphothreonine modification. 2 positions are modified to phosphoserine: S23 and S161. The 108-residue stretch at 165–272 (GVIKQGWLHK…WLIMLKKIIQ (108 aa)) folds into the PH domain. Y248 bears the Phosphotyrosine mark. Residues S306 and S445 each carry the phosphoserine modification. A C2 DOCK-type domain is found at 640 to 818 (KNHLYVYPLQ…PLLKIKTHLE (179 aa)). The segment at 1227–1267 (QNGHGIKREDSRGSLIPEGATGFPDPGSTSENTRQSSSRSS) is disordered. A phosphoserine mark is found at S1237 and S1240. A compositionally biased stretch (low complexity) spans 1254–1267 (STSENTRQSSSRSS). Residues 1609-2036 (KSYASTPELR…LSDIIHEQIL (428 aa)) form the DOCKER domain.

It belongs to the DOCK family. In terms of assembly, interacts with CDC42. As to expression, expressed in spleen, thymus, mesenteric lymph nodes (MLN), bone marrow and peripheral blood lymphocytes. Enriched in B-cells from germinal centers. Expressed in B-, T- and dendritic cells as well as Purkinje cells.

Its function is as follows. Guanine nucleotide-exchange factor (GEF) that activates CDC42 by exchanging bound GDP for free GTP. Required for marginal zone (MZ) B-cell development, is associated with early bone marrow B-cell development, MZ B-cell formation, MZ B-cell number and marginal metallophilic macrophages morphology. Facilitates filopodia formation through the activation of CDC42. This is Dedicator of cytokinesis protein 11 from Mus musculus (Mouse).